Consider the following 574-residue polypeptide: MFSSIMFKKKPKQNLNENEITSQSTTTTSTLSDSKPSEKKIKDNKNDKFKINENDTIVEIEWESDIQQKYDLIALYDNDTNVIDDYIWHWKINDEYTYNNNNTNIIRDPNKNYYIKYWRIDDNNNGINHHHHYNHHHHINNHHHNHIKTNHHSLPPNLHLSPLHNNNHHRHHSHQFPKVSINNVYKQIHNYKLKNHFIRQQFQNNSTTNQDTIKIKLSHFEERNLLKSVDYSGEMFKQYSNWMTNNWERIKDKMVRDLVLPGSHDAATYGIKSSSLRVPGDKVPSFIPNSIVSKWSKTQSGNIFKQLTMGYRYFDLRVAPYPVTGKLYIYHAMFSVPVSEVLDDIVKFIKNTNYYQQPNSSNNNDEKQQLQQQQQLFKKEIILLHWNHLGYLSIEQHQELQLMIKSKLDGMLANRQLGNNVKVRELEFTPIINIYDDNGLKKRIINDDGKKSKQPFDSIQNEPLFWYSNKSLVSNYDSNQFHTSKDVISFLSREVTYNHKDRFWVAQCILTIDSKKLLHITTNSLLDWNHSEFPKFLKFFENLEEKKVPTNIIMTDFCTHYPITDYAIRRNINE.

The tract at residues 1-42 is disordered; that stretch reads MFSSIMFKKKPKQNLNENEITSQSTTTTSTLSDSKPSEKKIK. A compositionally biased stretch (low complexity) spans 21–34; the sequence is TSQSTTTTSTLSDS. Positions 270 to 449 constitute a PI-PLC X-box domain; that stretch reads GIKSSSLRVP…LKKRIINDDG (180 aa).

The protein is PI-PLC X domain-containing protein DDB_G0269228 of Dictyostelium discoideum (Social amoeba).